Reading from the N-terminus, the 111-residue chain is Heavy metal-associated isoprenylated plant protein 10 (111 aa).

Residues 1–68 (MQETVVFEWG…ICDYVDITAV (68 aa)) enclose the HMA domain. The tract at residues 68 to 111 (VGPEGQPAQNRNPVKKPEPKVIRGRPYPPQKKTPGKNSDECIIL) is disordered. The residue at position 108 (Cys-108) is a Cysteine methyl ester. Cys-108 carries the S-farnesyl cysteine lipid modification. A propeptide spans 109 to 111 (IIL) (removed in mature form).

It belongs to the HIPP family.

Probable heavy-metal-binding protein. The polypeptide is Heavy metal-associated isoprenylated plant protein 10 (Arabidopsis thaliana (Mouse-ear cress)).